Consider the following 545-residue polypeptide: MRPFSGSDCLKPVTEGINRAFGAKEPWQVATITATTVLGGVWLWTVICQDENLYIRGKRQFFKFAKKIPAVRRQVETELAKAKNDFETEIKKSNAHLTYSETLPEKGLSKEEILRLVDEHLKTGHYNWRDGRVSGAVYGYKPDLVELVTEVYGKASYTNPLHADLFPGVCKMEAEVVRMACNLFHGNSASCGTMTTGGTESIVMAMKAYRDFAREYKGITRPNIVVPKTVHAAFDKGGQYFNIHVRSVDVDPETYEVDIKKFKRAINRNTILLVGSAPNFPYGTIDDIEAIAALGVKYDIPVHVDACLGSFVVALVRNAGYKLRPFDFEVKGVTSISADTHKYGFAPKGSSVILYSDKKYKDHQFTVTTDWPGGVYGSPTVNGSRAGGIIAACWATMMSFGYDGYLEATKRIVDTARYIERGVRDIDGIFIFGKPATSVIALGSNVFDIFRLSDSLCKLGWNLNALQFPSGIHLCVTDMHTQPGVADKFIADVRSCTAEIMKDPGQPVVGKMALYGMAQSIPDRSVIGEVTRLFLHSMYYTPSQK.

Residues 1-26 (MRPFSGSDCLKPVTEGINRAFGAKEP) lie on the Lumenal side of the membrane. Residues 27–47 (WQVATITATTVLGGVWLWTVI) traverse the membrane as a helical; Signal-anchor for type III membrane protein segment. Topologically, residues 48 to 545 (CQDENLYIRG…HSMYYTPSQK (498 aa)) are cytoplasmic. Lys342 bears the N6-(pyridoxal phosphate)lysine mark.

Belongs to the group II decarboxylase family. Sphingosine-1-phosphate lyase subfamily. Requires pyridoxal 5'-phosphate as cofactor. Localized to the developing gut primordium during embryogenesis.

Its subcellular location is the endoplasmic reticulum membrane. It catalyses the reaction sphinganine 1-phosphate = hexadecanal + phosphoethanolamine. It functions in the pathway lipid metabolism; sphingolipid metabolism. Functionally, cleaves phosphorylated sphingoid bases (PSBs), such as sphingosine-1-phosphate, into fatty aldehydes and phosphoethanolamine. Sphingolipid catabolism is required for normal development including viability, reproduction and muscle development. The chain is Sphingosine-1-phosphate lyase from Drosophila melanogaster (Fruit fly).